We begin with the raw amino-acid sequence, 161 residues long: Phosphotransferase enzyme IIB component GlvB (161 aa).

A helical transmembrane segment spans residues 10–32 (LTQIAIGLCFTLLYFVVFRTLIL). A PTS EIIB type-1 domain is found at 70-152 (LDQAAGILQA…DSLINSHQSA (83 aa)). The Phosphocysteine intermediate role is filled by C92.

The protein resides in the cell inner membrane. Functionally, the phosphoenolpyruvate-dependent sugar phosphotransferase system (sugar PTS), a major carbohydrate active -transport system, catalyzes the phosphorylation of incoming sugar substrates concomitantly with their translocation across the cell membrane. This operon may be cryptic in wild-type K12 strains. This chain is Phosphotransferase enzyme IIB component GlvB, found in Escherichia coli (strain K12).